The sequence spans 344 residues: Phenylalanine--tRNA ligase alpha subunit (344 aa).

Glutamate 256 provides a ligand contact to Mg(2+).

Belongs to the class-II aminoacyl-tRNA synthetase family. Phe-tRNA synthetase alpha subunit type 1 subfamily. Tetramer of two alpha and two beta subunits. Mg(2+) serves as cofactor.

It is found in the cytoplasm. It carries out the reaction tRNA(Phe) + L-phenylalanine + ATP = L-phenylalanyl-tRNA(Phe) + AMP + diphosphate + H(+). The chain is Phenylalanine--tRNA ligase alpha subunit from Geobacillus thermodenitrificans (strain NG80-2).